The primary structure comprises 226 residues: 7-cyano-7-deazaguanine synthase (226 aa).

Residue 12 to 22 (LSGGLDSATVV) coordinates ATP. Zn(2+) is bound by residues Cys-191, Cys-201, Cys-204, and Cys-207.

Belongs to the QueC family. Zn(2+) serves as cofactor.

It catalyses the reaction 7-carboxy-7-deazaguanine + NH4(+) + ATP = 7-cyano-7-deazaguanine + ADP + phosphate + H2O + H(+). The protein operates within purine metabolism; 7-cyano-7-deazaguanine biosynthesis. In terms of biological role, catalyzes the ATP-dependent conversion of 7-carboxy-7-deazaguanine (CDG) to 7-cyano-7-deazaguanine (preQ(0)). In Pseudomonas syringae pv. tomato (strain ATCC BAA-871 / DC3000), this protein is 7-cyano-7-deazaguanine synthase.